The following is a 325-amino-acid chain: MSETATWQPSASIPNLLKRAAIMTEIRRFFADRGVLEVETPCMSQATVTDIHLVPFETRFVGPGHSQGMNLYMMTSPEYHMKRLLAAGCGPVYQLCRSFRNEEMGRHHNPEFTMLEWYRPHYDMYRLMNEVDDLLQQVLDCAGAETLSYQQVFQRHLEIDPLSADKTQLREAAAKLDLSNVADTEEDRDTLLQLLFAFGVEPHIGKDRPTFVYHFPASQASLAQISTEDHRVAERFEVYYKGIELANGFHELTDAREQQQRFDQDNRKRAARGLPQQPIDTNLLEALKAGLPDSSGVALGVDRLVMLALGAEQLADVIAFTVDRA.

Residue 76–78 (SPE) coordinates substrate. ATP-binding positions include 100-102 (RNE) and Asn109. Tyr118 contributes to the substrate binding site. 244–245 (EL) contributes to the ATP binding site. Glu251 is a binding site for substrate. Gly300 lines the ATP pocket.

Belongs to the class-II aminoacyl-tRNA synthetase family. EpmA subfamily. As to quaternary structure, homodimer.

It catalyses the reaction D-beta-lysine + L-lysyl-[protein] + ATP = N(6)-((3R)-3,6-diaminohexanoyl)-L-lysyl-[protein] + AMP + diphosphate + H(+). Functionally, with EpmB is involved in the beta-lysylation step of the post-translational modification of translation elongation factor P (EF-P). Catalyzes the ATP-dependent activation of (R)-beta-lysine produced by EpmB, forming a lysyl-adenylate, from which the beta-lysyl moiety is then transferred to the epsilon-amino group of a conserved specific lysine residue in EF-P. The chain is Elongation factor P--(R)-beta-lysine ligase from Enterobacter sp. (strain 638).